Consider the following 488-residue polypeptide: Lysine--tRNA ligase (488 aa).

Glu398 and Glu405 together coordinate Mg(2+).

This sequence belongs to the class-II aminoacyl-tRNA synthetase family. Homodimer. The cofactor is Mg(2+).

It localises to the cytoplasm. It carries out the reaction tRNA(Lys) + L-lysine + ATP = L-lysyl-tRNA(Lys) + AMP + diphosphate. This is Lysine--tRNA ligase from Carboxydothermus hydrogenoformans (strain ATCC BAA-161 / DSM 6008 / Z-2901).